Here is a 306-residue protein sequence, read N- to C-terminus: Acetaldehyde dehydrogenase (306 aa).

Residue 12-15 coordinates NAD(+); the sequence is SGNI. C127 serves as the catalytic Acyl-thioester intermediate. Residues 158-166 and N277 contribute to the NAD(+) site; that span reads SAGPGTRAN.

Belongs to the acetaldehyde dehydrogenase family.

The catalysed reaction is acetaldehyde + NAD(+) + CoA = acetyl-CoA + NADH + H(+). This is Acetaldehyde dehydrogenase from Mycolicibacterium gilvum (strain PYR-GCK) (Mycobacterium gilvum (strain PYR-GCK)).